Consider the following 257-residue polypeptide: Deoxyribose-phosphate aldolase (257 aa).

D102 serves as the catalytic Proton donor/acceptor. K166 (schiff-base intermediate with acetaldehyde) is an active-site residue. The active-site Proton donor/acceptor is K198.

It belongs to the DeoC/FbaB aldolase family. DeoC type 2 subfamily.

The protein resides in the cytoplasm. It catalyses the reaction 2-deoxy-D-ribose 5-phosphate = D-glyceraldehyde 3-phosphate + acetaldehyde. It functions in the pathway carbohydrate degradation; 2-deoxy-D-ribose 1-phosphate degradation; D-glyceraldehyde 3-phosphate and acetaldehyde from 2-deoxy-alpha-D-ribose 1-phosphate: step 2/2. Functionally, catalyzes a reversible aldol reaction between acetaldehyde and D-glyceraldehyde 3-phosphate to generate 2-deoxy-D-ribose 5-phosphate. This Shewanella sediminis (strain HAW-EB3) protein is Deoxyribose-phosphate aldolase.